The following is an 84-amino-acid chain: M-zodatoxin-Lt2b (84 aa).

Residues 1-22 (MKYFVIALALAVALVCIAESTA) form the signal peptide. Positions 23 to 58 (YEVNEELENELDDLDDAAWLAVAEELQGLEDFEESR) are excised as a propeptide. The Processing quadruplet motif signature appears at 55–58 (EESR).

Post-translationally, cleavage of the propeptide depends on the processing quadruplet motif (XXXR, with at least one of X being E). As to expression, expressed by the venom gland.

It localises to the secreted. In terms of biological role, has antimicrobial activity against both Gram-positive and Gram-negative bacteria, and yeasts. Also has a strong hemolytic activity against rabbit erythrocytes. Causes paralysis, but is not lethal when injected into insect (M.domestica) larvae. The sequence is that of M-zodatoxin-Lt2b from Lachesana tarabaevi (Spider).